Reading from the N-terminus, the 88-residue chain is RQC P-site tRNA stabilizing factor (88 aa).

An S4 RNA-binding domain is found at 1–60 (MRLDKYLKVSRIIKRRTVAKEVADKGRIKVNGILAKSSTDLKVNDQVEIRFGNKLLLVKV).

The protein belongs to the RqcP family. In terms of assembly, associates with stalled 50S ribosomal subunits. Binds to RqcH, 23S rRNA and the P-site tRNA. Does not require RqcH for association with 50S subunits.

Functionally, key component of the ribosome quality control system (RQC), a ribosome-associated complex that mediates the extraction of incompletely synthesized nascent chains from stalled ribosomes and their subsequent degradation. RqcH recruits Ala-charged tRNA, and with RqcP directs the elongation of stalled nascent chains on 50S ribosomal subunits, leading to non-templated C-terminal alanine extensions (Ala tail). The Ala tail promotes nascent chain degradation. RqcP is associated with the translocation-like movement of the peptidyl-tRNA from the A-site into the P-site. This chain is RQC P-site tRNA stabilizing factor, found in Streptococcus pneumoniae (strain ATCC BAA-255 / R6).